The following is a 333-amino-acid chain: Probable tRNA pseudouridine synthase B (333 aa).

Asp-71 functions as the Nucleophile in the catalytic mechanism. The region spanning 238–313 is the PUA domain; it reads LPKIWVRDSA…LVARTDRVVM (76 aa).

The protein belongs to the pseudouridine synthase TruB family. Type 2 subfamily.

It carries out the reaction uridine(55) in tRNA = pseudouridine(55) in tRNA. Functionally, could be responsible for synthesis of pseudouridine from uracil-55 in the psi GC loop of transfer RNAs. The protein is Probable tRNA pseudouridine synthase B of Pyrobaculum calidifontis (strain DSM 21063 / JCM 11548 / VA1).